The chain runs to 406 residues: S-adenosylmethionine synthase (406 aa).

Residue H16 coordinates ATP. Mg(2+) is bound at residue D18. Position 44 (E44) interacts with K(+). L-methionine contacts are provided by E57 and Q109. Positions 109 to 119 are flexible loop; it reads QSPQIAQGVDE. ATP contacts are provided by residues 174–176, 249–250, D258, 264–265, A281, and K285; these read DAK, RF, and RK. D258 contacts L-methionine. Residue K289 participates in L-methionine binding.

This sequence belongs to the AdoMet synthase family. As to quaternary structure, homotetramer; dimer of dimers. Mg(2+) serves as cofactor. The cofactor is K(+).

Its subcellular location is the cytoplasm. It carries out the reaction L-methionine + ATP + H2O = S-adenosyl-L-methionine + phosphate + diphosphate. It participates in amino-acid biosynthesis; S-adenosyl-L-methionine biosynthesis; S-adenosyl-L-methionine from L-methionine: step 1/1. Functionally, catalyzes the formation of S-adenosylmethionine (AdoMet) from methionine and ATP. The overall synthetic reaction is composed of two sequential steps, AdoMet formation and the subsequent tripolyphosphate hydrolysis which occurs prior to release of AdoMet from the enzyme. This chain is S-adenosylmethionine synthase, found in Sphingopyxis alaskensis (strain DSM 13593 / LMG 18877 / RB2256) (Sphingomonas alaskensis).